A 427-amino-acid chain; its full sequence is Dihydroorotase (427 aa).

The Zn(2+) site is built by His-60 and His-62. Substrate-binding positions include His-62–Arg-64 and Asn-94. Residues Asp-151, His-178, and His-231 each contribute to the Zn(2+) site. A substrate-binding site is contributed by Asn-277. Residue Asp-304 participates in Zn(2+) binding. The active site involves Asp-304. Residues His-308 and Phe-322–Gly-323 each bind substrate.

This sequence belongs to the metallo-dependent hydrolases superfamily. DHOase family. Class I DHOase subfamily. Requires Zn(2+) as cofactor.

It carries out the reaction (S)-dihydroorotate + H2O = N-carbamoyl-L-aspartate + H(+). The protein operates within pyrimidine metabolism; UMP biosynthesis via de novo pathway; (S)-dihydroorotate from bicarbonate: step 3/3. Functionally, catalyzes the reversible cyclization of carbamoyl aspartate to dihydroorotate. In Pelotomaculum thermopropionicum (strain DSM 13744 / JCM 10971 / SI), this protein is Dihydroorotase.